Consider the following 716-residue polypeptide: Fatty acid oxidation complex subunit alpha (716 aa).

An enoyl-CoA hydratase/isomerase region spans residues 1–189; the sequence is MIYQSPTIQV…KVGAVDAVVA (189 aa). Position 296 (D296) interacts with substrate. Positions 311–716 are 3-hydroxyacyl-CoA dehydrogenase; that stretch reads KEVKNAAVLG…ATNNGSYYQA (406 aa). Residues M324, D343, 400 to 402, K407, and S429 contribute to the NAD(+) site; that span reads VVE. H450 functions as the For 3-hydroxyacyl-CoA dehydrogenase activity in the catalytic mechanism. N453 is a binding site for NAD(+). Substrate-binding residues include N500 and Y660.

This sequence in the N-terminal section; belongs to the enoyl-CoA hydratase/isomerase family. The protein in the C-terminal section; belongs to the 3-hydroxyacyl-CoA dehydrogenase family. In terms of assembly, heterotetramer of two alpha chains (FadB) and two beta chains (FadA).

The enzyme catalyses a (3S)-3-hydroxyacyl-CoA + NAD(+) = a 3-oxoacyl-CoA + NADH + H(+). The catalysed reaction is a (3S)-3-hydroxyacyl-CoA = a (2E)-enoyl-CoA + H2O. It carries out the reaction a 4-saturated-(3S)-3-hydroxyacyl-CoA = a (3E)-enoyl-CoA + H2O. It catalyses the reaction (3S)-3-hydroxybutanoyl-CoA = (3R)-3-hydroxybutanoyl-CoA. The enzyme catalyses a (3Z)-enoyl-CoA = a 4-saturated (2E)-enoyl-CoA. The catalysed reaction is a (3E)-enoyl-CoA = a 4-saturated (2E)-enoyl-CoA. The protein operates within lipid metabolism; fatty acid beta-oxidation. Functionally, involved in the aerobic and anaerobic degradation of long-chain fatty acids via beta-oxidation cycle. Catalyzes the formation of 3-oxoacyl-CoA from enoyl-CoA via L-3-hydroxyacyl-CoA. It can also use D-3-hydroxyacyl-CoA and cis-3-enoyl-CoA as substrate. In Shewanella putrefaciens (strain CN-32 / ATCC BAA-453), this protein is Fatty acid oxidation complex subunit alpha.